A 219-amino-acid polypeptide reads, in one-letter code: Thiamine-phosphate synthase (219 aa).

4-amino-2-methyl-5-(diphosphooxymethyl)pyrimidine-binding positions include Q44–K48 and N79. The Mg(2+) site is built by D80 and D99. Residue S117 participates in 4-amino-2-methyl-5-(diphosphooxymethyl)pyrimidine binding. T143 to T145 serves as a coordination point for 2-[(2R,5Z)-2-carboxy-4-methylthiazol-5(2H)-ylidene]ethyl phosphate. K146 is a binding site for 4-amino-2-methyl-5-(diphosphooxymethyl)pyrimidine. Residues G175 and I195–S196 each bind 2-[(2R,5Z)-2-carboxy-4-methylthiazol-5(2H)-ylidene]ethyl phosphate.

The protein belongs to the thiamine-phosphate synthase family. It depends on Mg(2+) as a cofactor.

The enzyme catalyses 2-[(2R,5Z)-2-carboxy-4-methylthiazol-5(2H)-ylidene]ethyl phosphate + 4-amino-2-methyl-5-(diphosphooxymethyl)pyrimidine + 2 H(+) = thiamine phosphate + CO2 + diphosphate. It carries out the reaction 2-(2-carboxy-4-methylthiazol-5-yl)ethyl phosphate + 4-amino-2-methyl-5-(diphosphooxymethyl)pyrimidine + 2 H(+) = thiamine phosphate + CO2 + diphosphate. The catalysed reaction is 4-methyl-5-(2-phosphooxyethyl)-thiazole + 4-amino-2-methyl-5-(diphosphooxymethyl)pyrimidine + H(+) = thiamine phosphate + diphosphate. It participates in cofactor biosynthesis; thiamine diphosphate biosynthesis; thiamine phosphate from 4-amino-2-methyl-5-diphosphomethylpyrimidine and 4-methyl-5-(2-phosphoethyl)-thiazole: step 1/1. Condenses 4-methyl-5-(beta-hydroxyethyl)thiazole monophosphate (THZ-P) and 2-methyl-4-amino-5-hydroxymethyl pyrimidine pyrophosphate (HMP-PP) to form thiamine monophosphate (TMP). This chain is Thiamine-phosphate synthase, found in Bacillus cereus (strain ZK / E33L).